The following is a 212-amino-acid chain: Urease accessory protein UreG 2 (212 aa).

11–18 provides a ligand contact to GTP; that stretch reads GPVGSGKT.

Belongs to the SIMIBI class G3E GTPase family. UreG subfamily. In terms of assembly, homodimer. UreD, UreF and UreG form a complex that acts as a GTP-hydrolysis-dependent molecular chaperone, activating the urease apoprotein by helping to assemble the nickel containing metallocenter of UreC. The UreE protein probably delivers the nickel.

It is found in the cytoplasm. Facilitates the functional incorporation of the urease nickel metallocenter. This process requires GTP hydrolysis, probably effectuated by UreG. The chain is Urease accessory protein UreG 2 from Brucella abortus (strain 2308).